The chain runs to 351 residues: RCC1 repeat-containing protein C10F6.04 (351 aa).

RCC1 repeat units follow at residues 1 to 48 (MLLS…LLDE), 50 to 106 (SQLW…IVHA), 108 to 162 (RRRV…CVTN), and 163 to 212 (EGNL…VLQE).

It is found in the cytoplasm. The protein resides in the nucleus. This is RCC1 repeat-containing protein C10F6.04 from Schizosaccharomyces pombe (strain 972 / ATCC 24843) (Fission yeast).